A 153-amino-acid polypeptide reads, in one-letter code: 3-hydroxyacyl-[acyl-carrier-protein] dehydratase FabZ (153 aa).

His52 is an active-site residue.

It belongs to the thioester dehydratase family. FabZ subfamily.

The protein localises to the cytoplasm. The enzyme catalyses a (3R)-hydroxyacyl-[ACP] = a (2E)-enoyl-[ACP] + H2O. Functionally, involved in unsaturated fatty acids biosynthesis. Catalyzes the dehydration of short chain beta-hydroxyacyl-ACPs and long chain saturated and unsaturated beta-hydroxyacyl-ACPs. In Magnetococcus marinus (strain ATCC BAA-1437 / JCM 17883 / MC-1), this protein is 3-hydroxyacyl-[acyl-carrier-protein] dehydratase FabZ.